A 273-amino-acid polypeptide reads, in one-letter code: Putative peptidyl-prolyl cis-trans isomerase Cbf2 (273 aa).

The signal sequence occupies residues methionine 1–alanine 21. The PpiC domain occupies proline 131–asparagine 228.

The catalysed reaction is [protein]-peptidylproline (omega=180) = [protein]-peptidylproline (omega=0). The chain is Putative peptidyl-prolyl cis-trans isomerase Cbf2 (cbf2) from Campylobacter jejuni subsp. jejuni serotype O:23/36 (strain 81-176).